The sequence spans 104 residues: Pyrimidine/purine nucleoside phosphorylase (104 aa).

Belongs to the nucleoside phosphorylase PpnP family.

The catalysed reaction is a purine D-ribonucleoside + phosphate = a purine nucleobase + alpha-D-ribose 1-phosphate. It carries out the reaction adenosine + phosphate = alpha-D-ribose 1-phosphate + adenine. It catalyses the reaction cytidine + phosphate = cytosine + alpha-D-ribose 1-phosphate. The enzyme catalyses guanosine + phosphate = alpha-D-ribose 1-phosphate + guanine. The catalysed reaction is inosine + phosphate = alpha-D-ribose 1-phosphate + hypoxanthine. It carries out the reaction thymidine + phosphate = 2-deoxy-alpha-D-ribose 1-phosphate + thymine. It catalyses the reaction uridine + phosphate = alpha-D-ribose 1-phosphate + uracil. The enzyme catalyses xanthosine + phosphate = alpha-D-ribose 1-phosphate + xanthine. Its function is as follows. Catalyzes the phosphorolysis of diverse nucleosides, yielding D-ribose 1-phosphate and the respective free bases. Can use uridine, adenosine, guanosine, cytidine, thymidine, inosine and xanthosine as substrates. Also catalyzes the reverse reactions. In Hydrogenovibrio crunogenus (strain DSM 25203 / XCL-2) (Thiomicrospira crunogena), this protein is Pyrimidine/purine nucleoside phosphorylase.